The following is a 330-amino-acid chain: tRNA uridine(34) hydroxylase (330 aa).

Residues 123–217 (SDPEVILVDT…YLEEVKQEES (95 aa)) form the Rhodanese domain. The Cysteine persulfide intermediate role is filled by Cys-177.

It belongs to the TrhO family.

It carries out the reaction uridine(34) in tRNA + AH2 + O2 = 5-hydroxyuridine(34) in tRNA + A + H2O. In terms of biological role, catalyzes oxygen-dependent 5-hydroxyuridine (ho5U) modification at position 34 in tRNAs. The sequence is that of tRNA uridine(34) hydroxylase from Shewanella sp. (strain ANA-3).